Consider the following 368-residue polypeptide: MTLQQKELFQKSPLLLENGETLSPVLVGYETYGTLSASRDNCILLEHALTGTAHAAKHFEDDAPGWWDDYIGPGKTIDTDKYFLVCTNVFGGCSGTTGPSSINPKTGEPFRLQFPGFSIKDIIKVQRELLEQLGVTRIVSVIGGSMGGMQATEWAIDYADITDSIINIASPLAAGPDAIGYNLIMRMAILNDPDFNGGNYIGQPEGGLATARMVGMMTYRTSELFSKRFERFTVAESSPAAFSKEHFQIESYLQYQGDTFVERFDANSYLYLTKAIDLFDVTAPAKDDLPAFSKIKIPYLLIGITTDQLFRIHDLRRGYELLKEWDVPVTYHEVASEYGHDAFLVEKEVPKFEPLIRSFLNNLPVKSI.

Residues 43–346 (ILLEHALTGT…EYGHDAFLVE (304 aa)) form the AB hydrolase-1 domain. The Nucleophile role is filled by Ser145. Residue Arg212 coordinates substrate. Active-site residues include Asp307 and His340. Asp341 serves as a coordination point for substrate.

The protein belongs to the AB hydrolase superfamily. MetX family. In terms of assembly, homodimer.

It is found in the cytoplasm. It catalyses the reaction L-homoserine + acetyl-CoA = O-acetyl-L-homoserine + CoA. Its pathway is amino-acid biosynthesis; L-methionine biosynthesis via de novo pathway; O-acetyl-L-homoserine from L-homoserine: step 1/1. Functionally, transfers an acetyl group from acetyl-CoA to L-homoserine, forming acetyl-L-homoserine. The protein is Homoserine O-acetyltransferase of Listeria innocua serovar 6a (strain ATCC BAA-680 / CLIP 11262).